The sequence spans 179 residues: MVEDRLISGIEACVASFSREVSTGKESEIFLVDLAVKAAGRSVKIEVLVDSEQGIVISQCAALSRRIRDMIESDDELQEVYGEVFELMVSSPGLGGPIRHVRQYIRHTGRLLSVRYRDDAGSVHDVTGRLIEVDLAEGHEPFLVLEPVRSGRKKNGSLPPSRLKMMLDRIDKAVVQVEF.

Belongs to the RimP family.

The protein localises to the cytoplasm. Functionally, required for maturation of 30S ribosomal subunits. In Prosthecochloris aestuarii (strain DSM 271 / SK 413), this protein is Ribosome maturation factor RimP.